Here is a 239-residue protein sequence, read N- to C-terminus: MDKFLVRPDLRDLQGGGEEPAPTGGASGDLKSPDWRHLRAEGLSCDYTVLFGKAEADKIFRELEQEVEYFTGALAKVQVFGKWHSVPRKQATYGDAGLTYTFSGLTLTPKPWVPVLERVRDRVCEVTGQTFNFVLVNRYKDGCDHIGEHRDDERELAPGSPIASVSFGACRDFIFRHKDSRGKRPRRTVEVVRLQLAHGSLLMMNPPTNTHWYHSLPIRKRVLAPRVNLTFRKILPTKK.

Positions 3–7 (KFLVR) match the PCNA-binding motif. The tract at residues 11–32 (RDLQGGGEEPAPTGGASGDLKS) is disordered. Residues 80–82 (FGK) and 100–102 (YTF) contribute to the substrate site. A Fe2OG dioxygenase domain is found at 130 to 235 (TFNFVLVNRY…RVNLTFRKIL (106 aa)). 2-oxoglutarate is bound by residues Asn-137, Tyr-139, and His-149. Fe cation contacts are provided by His-149 and Asp-151. Asp-152 contributes to the substrate binding site. 2-oxoglutarate-binding residues include His-214, Arg-226, Thr-230, and Arg-232. His-214 lines the Fe cation pocket.

It belongs to the alkB family. Interacts with PCNA homotrimer; this interaction is enhanced during the S-phase of the cell cycle. Interacts with nucleolar proteins NCL, UBTF and NPM1. Interacts with XRCC5-XRCC6 heterodimer. Requires Fe(2+) as cofactor. As to expression, detected in liver, testis and kidney (at protein level). Detected in heart and testis.

It localises to the nucleus. The protein resides in the nucleolus. It is found in the nucleoplasm. It catalyses the reaction a methylated nucleobase within DNA + 2-oxoglutarate + O2 = a nucleobase within DNA + formaldehyde + succinate + CO2. The catalysed reaction is an N(1)-methyl-2'-deoxyadenosine in double-stranded DNA + 2-oxoglutarate + O2 = a 2'-deoxyadenosine in double-stranded DNA + formaldehyde + succinate + CO2 + H(+). The enzyme catalyses an N(1)-methyl-2'-deoxyadenosine in single-stranded DNA + 2-oxoglutarate + O2 = a 2'-deoxyadenosine in single-stranded DNA + formaldehyde + succinate + CO2 + H(+). It carries out the reaction an N(3)-methyl-2'-deoxycytidine in double-stranded DNA + 2-oxoglutarate + O2 = a 2'-deoxycytidine in double-stranded DNA + formaldehyde + succinate + CO2 + H(+). It catalyses the reaction an N(3)-methyl-2'-deoxycytidine in single-stranded DNA + 2-oxoglutarate + O2 = a 2'-deoxycytidine in single-stranded DNA + formaldehyde + succinate + CO2 + H(+). The catalysed reaction is a 1,N(6)-etheno-2'-deoxyadenosine in double-stranded DNA + 2-oxoglutarate + O2 + H2O = a 2'-deoxyadenosine in double-stranded DNA + glyoxal + succinate + CO2. The enzyme catalyses a 1,N(6)-etheno-2'-deoxyadenosine in single-stranded DNA + 2-oxoglutarate + O2 + H2O = a 2'-deoxyadenosine in single-stranded DNA + glyoxal + succinate + CO2. It carries out the reaction a 3,N(4)-etheno-2'-deoxycytidine in double-stranded DNA + 2-oxoglutarate + O2 + H2O = a 2'-deoxycytidine in double-stranded DNA + glyoxal + succinate + CO2. It catalyses the reaction a 3,N(4)-etheno-2'-deoxycytidine in single-stranded DNA + 2-oxoglutarate + O2 + H2O = a 2'-deoxycytidine in single-stranded DNA + glyoxal + succinate + CO2. The catalysed reaction is a 1,N(2)-etheno-2'-deoxyguanosine in double-stranded DNA + 2-oxoglutarate + O2 + H2O = a 2'-deoxyguanosine in double-stranded DNA + glyoxal + succinate + CO2. Its activity is regulated as follows. Activated by magnesium ions. Its function is as follows. Dioxygenase that repairs alkylated nucleic acid bases by direct reversal oxidative dealkylation. Can process both double-stranded (ds) and single-stranded (ss) DNA substrates, with a strong preference for dsDNA. Uses molecular oxygen, 2-oxoglutarate and iron as cofactors to oxidize the alkyl groups that are subsequently released as aldehydes, regenerating the undamaged bases. Probes the base pair stability, locates a weakened base pair and flips the damaged base to accommodate the lesion in its active site for efficient catalysis. Repairs monoalkylated bases, specifically N1-methyladenine and N3-methylcytosine, as well as higher order alkyl adducts such as bases modified with exocyclic bridged adducts known as etheno adducts including 1,N6-ethenoadenine, 3,N4-ethenocytosine and 1,N2-ethenoguanine. Acts as a gatekeeper of genomic integrity under alkylation stress. Efficiently repairs alkylated lesions in ribosomal DNA (rDNA). These lesions can cause ss- and dsDNA strand breaks that severely impair rDNA transcription. In a response mechanism to DNA damage, associates with PCNA at replication forks to repair alkylated adducts prior to replication. This Mus musculus (Mouse) protein is DNA oxidative demethylase ALKBH2 (Alkbh2).